Here is a 783-residue protein sequence, read N- to C-terminus: Zinc finger protein 107 (783 aa).

A C2H2-type 1; atypical zinc finger spans residues 76 to 98 (FQCNKYVKVFDKFSNSNRYKRRH). 3 consecutive C2H2-type zinc fingers follow at residues 104–126 (FKCK…RRIH), 132–154 (YKCE…KRIH), and 160–182 (YKCE…KIIH). K186 participates in a covalent cross-link: Glycyl lysine isopeptide (Lys-Gly) (interchain with G-Cter in SUMO2). The C2H2-type 5 zinc finger occupies 188-210 (NKCEECGKAFKQASHLTIHKIIH). The C2H2-type 6; atypical zinc-finger motif lies at 216–238 (YKYEECGKVFSQSSHLTTQKILH). A C2H2-type 7 zinc finger spans residues 244–266 (YKCKECGKAFNLFSNLTNHKRIH). A C2H2-type 8; atypical zinc finger spans residues 272–294 (YKCKECGRAFNISSNLNKQEKIH). Residues 300–322 (NKCEECDKAFNRSLKLTAHKKIL) form a C2H2-type 9; atypical zinc finger. 2 consecutive C2H2-type zinc fingers follow at residues 328-350 (YKCE…KIIH) and 356-378 (YKCK…KKIH). The segment at 384 to 406 (YKCEECGKAFNQHSNLINHRKIY) adopts a C2H2-type 12; atypical zinc-finger fold. 4 consecutive C2H2-type zinc fingers follow at residues 412–434 (YKCE…KKIH), 440–462 (YKCE…KKIH), 468–490 (YKCE…KRIH), and 496–518 (YKCE…KIVH). The C2H2-type 17; atypical zinc-finger motif lies at 524-546 (NKCEEFGKAFKQSSHRTIHKIIH). The segment at 552-574 (YKCEEHGKVFNQSSNLTTQKIIH) adopts a C2H2-type 18; atypical zinc-finger fold. The C2H2-type 19; atypical zinc finger occupies 580 to 602 (YKFEEHGKAFNLFSNITNHKIIY). 5 consecutive C2H2-type zinc fingers follow at residues 608–630 (HKCE…KRIH), 636–658 (YQCA…KIIH), 664–686 (YKCK…KKIH), 692–714 (YKCE…KKIH), and 720–742 (YKCE…KIIH). The C2H2-type 25; atypical zinc finger occupies 748–770 (YKCGDYGRAFNLSSNLTTHKKIH).

The protein belongs to the krueppel C2H2-type zinc-finger protein family. As to expression, expressed in brain, heart, skeletal muscle, kidney and pancreas. Weakly expressed in aorta, liver and lung.

The protein localises to the nucleus. Functionally, may be involved in transcriptional regulation. This is Zinc finger protein 107 (ZNF107) from Homo sapiens (Human).